Consider the following 539-residue polypeptide: Protoporphyrinogen oxidase (539 aa).

FAD-binding positions include 18–23 (GGGVSG), 43–44 (ES), tryptophan 51, 70–73 (GPRT), valine 300, and 521–523 (PGV).

This sequence belongs to the protoporphyrinogen/coproporphyrinogen oxidase family. Protoporphyrinogen oxidase subfamily. The cofactor is FAD.

Its subcellular location is the mitochondrion inner membrane. The enzyme catalyses protoporphyrinogen IX + 3 O2 = protoporphyrin IX + 3 H2O2. Its pathway is porphyrin-containing compound metabolism; protoporphyrin-IX biosynthesis; protoporphyrin-IX from protoporphyrinogen-IX: step 1/1. In terms of biological role, catalyzes the 6-electron oxidation of protoporphyrinogen-IX to form protoporphyrin-IX. The polypeptide is Protoporphyrinogen oxidase (Saccharomyces cerevisiae (strain ATCC 204508 / S288c) (Baker's yeast)).